Here is a 561-residue protein sequence, read N- to C-terminus: Arginine--tRNA ligase (561 aa).

Positions 129–139 match the 'HIGH' region motif; sequence ANPTGPLHVGH.

It belongs to the class-I aminoacyl-tRNA synthetase family. Monomer.

It is found in the cytoplasm. It carries out the reaction tRNA(Arg) + L-arginine + ATP = L-arginyl-tRNA(Arg) + AMP + diphosphate. This chain is Arginine--tRNA ligase, found in Bordetella parapertussis (strain 12822 / ATCC BAA-587 / NCTC 13253).